A 527-amino-acid chain; its full sequence is Succinate-semialdehyde dehydrogenase, mitochondrial (527 aa).

Residues 1 to 35 (MAMAMAMRRAAALGARHILAASSTSSSGVLLRRHM) constitute a mitochondrion transit peptide. NAD(+) contacts are provided by residues R208, 223–226 (KPSE), and 276–281 (GSTAVG). Substrate is bound at residue R208. The active-site Proton acceptor is the E298. R326, C332, and S489 together coordinate substrate. The active-site Nucleophile is C332. Residues C332 and C334 are joined by a disulfide bond.

This sequence belongs to the aldehyde dehydrogenase family. As to quaternary structure, homotetramer.

It is found in the mitochondrion matrix. It carries out the reaction succinate semialdehyde + NAD(+) + H2O = succinate + NADH + 2 H(+). Its pathway is amino-acid degradation; 4-aminobutanoate degradation. Its activity is regulated as follows. Redox-regulated. Inhibited under oxydizing conditions. Its function is as follows. Oxidizes specifically succinate semialdehyde. Involved in plant response to environmental stress by preventing the accumulation of reactive oxygen species. This Oryza sativa subsp. japonica (Rice) protein is Succinate-semialdehyde dehydrogenase, mitochondrial (ALDH5F1).